The primary structure comprises 430 residues: Adenylosuccinate synthetase (430 aa).

GTP is bound by residues 12 to 18 (GDEGKGK) and 40 to 42 (GHT). Catalysis depends on aspartate 13, which acts as the Proton acceptor. Mg(2+)-binding residues include aspartate 13 and glycine 40. Residues 13–16 (DEGK), 38–41 (NAGH), threonine 130, arginine 144, glutamine 224, threonine 239, and arginine 303 contribute to the IMP site. The Proton donor role is filled by histidine 41. 299–305 (TTTGRKR) contacts substrate. GTP is bound by residues arginine 305, 331-333 (KLD), and 413-415 (STS).

The protein belongs to the adenylosuccinate synthetase family. Homodimer. Mg(2+) serves as cofactor.

The protein localises to the cytoplasm. The enzyme catalyses IMP + L-aspartate + GTP = N(6)-(1,2-dicarboxyethyl)-AMP + GDP + phosphate + 2 H(+). It functions in the pathway purine metabolism; AMP biosynthesis via de novo pathway; AMP from IMP: step 1/2. In terms of biological role, plays an important role in the de novo pathway of purine nucleotide biosynthesis. Catalyzes the first committed step in the biosynthesis of AMP from IMP. In Ruegeria pomeroyi (strain ATCC 700808 / DSM 15171 / DSS-3) (Silicibacter pomeroyi), this protein is Adenylosuccinate synthetase.